We begin with the raw amino-acid sequence, 314 residues long: tRNA dimethylallyltransferase (314 aa).

Residue 11 to 18 (GPTGSGKT) coordinates ATP. 13–18 (TGSGKT) contributes to the substrate binding site. The tract at residues 36–39 (DSMQ) is interaction with substrate tRNA.

The protein belongs to the IPP transferase family. As to quaternary structure, monomer. It depends on Mg(2+) as a cofactor.

The enzyme catalyses adenosine(37) in tRNA + dimethylallyl diphosphate = N(6)-dimethylallyladenosine(37) in tRNA + diphosphate. Functionally, catalyzes the transfer of a dimethylallyl group onto the adenine at position 37 in tRNAs that read codons beginning with uridine, leading to the formation of N6-(dimethylallyl)adenosine (i(6)A). This Chlamydia muridarum (strain MoPn / Nigg) protein is tRNA dimethylallyltransferase.